The chain runs to 665 residues: GRB2-associated-binding protein 2 (665 aa).

Position 2 is a phosphoserine (S2). The PH domain occupies 8-119; sequence DVVCTGWLRK…WVQSICQICG (112 aa). The tract at residues 131 to 184 is disordered; sequence RNLSSASHGPRSSPAEFSSSQHLLRERKSSAPSHSSQPTLFTFEPPVSSHMQPT. 10 positions are modified to phosphoserine: S135, S142, S143, S149, S150, S160, S165, S211, S220, and S261. Polar residues predominate over residues 160–170; that stretch reads SAPSHSSQPTL. Position 262 is a phosphothreonine (T262). Y263 carries the phosphotyrosine modification. Phosphothreonine is present on T275. S278 and S282 each carry phosphoserine. Residue T284 is modified to Phosphothreonine. Y290 carries the phosphotyrosine modification. Residue T328 is modified to Phosphothreonine. Residues 338–396 are disordered; sequence VATPGDSAIAPPPRPPKPSQAETSQWGSIQQRPPISENSRSVAATIPRRNTLPAMDNSR. Residues 348 to 355 carry the SH3-binding motif; it reads PPPRPPKP. A compositionally biased stretch (polar residues) spans 357 to 379; that stretch reads QAETSQWGSIQQRPPISENSRSV. S365 is subject to Phosphoserine. 2 positions are modified to phosphothreonine: T382 and T388. Position 402 is a phosphoserine (S402). T405 is subject to Phosphothreonine. The interval 408-445 is disordered; that stretch reads YPARGSGESASWSAEPPGKTAVGRSNSASSDDNYVPMN. Residue S420 is modified to Phosphoserine. Polar residues predominate over residues 430–439; the sequence is GRSNSASSDD. Position 441 is a phosphotyrosine (Y441). S469 carries the post-translational modification Phosphoserine. The interval 491 to 517 is disordered; sequence PSRGSEIQPPPVNRNLKPDRKAKPTPL. The SH3-binding signature appears at 499–508; sequence PPPVNRNLKP. S532 carries the phosphoserine modification. Polar residues-rich tracts occupy residues 548 to 566 and 578 to 600; these read SSSQ…STDS and NPVS…STGS. 2 disordered regions span residues 548 to 632 and 646 to 665; these read SSSQ…KVDY and TMQE…GAKL. S612 bears the Phosphoserine mark. Y632 bears the Phosphotyrosine mark. A compositionally biased stretch (polar residues) spans 646-659; the sequence is TMQEWTDVRQSSEP.

Belongs to the GAB family. As to quaternary structure, part of a complex composed of EEIG1, TNFRSF11A/RANK, PLCG2, GAB2, TEC and BTK; complex formation increases in the presence of TNFSF11/RANKL. Interacts with HCK. Interacts with SHC1; may mediate interaction with receptors. Interacts with SYK. Interacts with PI-3 kinase. Interacts with GRB2 (via SH3 2 domain). Interacts (phosphorylated) with PTPN11. Interacts with TNFRSF11A (via cytoplasmic domain). Interacts (phosphorylated) with 14-3-3 family proteins SFN, YWHAB, YWHAE, YWHAG, YWHAH, YWHAQ and YWHAZ; prevents interaction with GRB2 and attenuates GAB2 signaling. Post-translationally, phosphorylated upon EGF stimulation. Phosphorylated on tyrosine residues by HCK upon IL6 signaling. Phosphorylated on tyrosine residue(s) by the thrombopoietin receptor (TPOR), stem cell factor receptor (SCFR), and T-cell and B-cell antigen receptors, gp130, IL-2R and IL-3R. Phosphorylated upon stimulation of TNFRSF11A/RANK by TNFSF11/RANKL. In terms of processing, dephosphorylated by PTPN11. Ubiquitously expressed.

It is found in the cytoplasm. The protein localises to the cell membrane. It localises to the membrane raft. In terms of biological role, adapter protein which acts downstream of several membrane receptors including cytokine, antigen, hormone, cell matrix and growth factor receptors to regulate multiple signaling pathways. Regulates osteoclast differentiation mediating the TNFRSF11A/RANK signaling. In allergic response, it plays a role in mast cells activation and degranulation through PI-3-kinase regulation. Also involved in the regulation of cell proliferation and hematopoiesis. This Mus musculus (Mouse) protein is GRB2-associated-binding protein 2 (Gab2).